We begin with the raw amino-acid sequence, 129 residues long: MLHLHILSWVLAIILFIATYLNISKNQGGTPYFKPLHMVLRLFMLLTLISGFWILIQSFMNGGANHMLLTLKMLCGVAVVGLMEVSIAKRKRHEQSHTMFWITIALIIITMVLGVILPLGPISKLFGIG.

4 helical membrane-spanning segments follow: residues 1-21 (MLHL…ATYL), 36-56 (LHMV…WILI), 67-87 (MLLT…EVSI), and 99-119 (MFWI…ILPL).

Belongs to the UPF0344 family.

The protein resides in the cell membrane. The protein is UPF0344 protein SAR0931 of Staphylococcus aureus (strain MRSA252).